The chain runs to 305 residues: DNA-directed RNA polymerase 35 kDa subunit (305 aa).

Belongs to the poxviridae DNA-directed RNA polymerase 35 kDa subunit family. As to quaternary structure, the DNA-dependent RNA polymerase used for intermediate and late genes expression consists of eight subunits 147 kDa, 133 kDa, 35 kDa, 30 kDa, 22 kDa, 19 kDa, 18 kDa and 7 kDa totalling more than 500 kDa in mass. The same holoenzyme, with the addition of the transcription-specificity factor RAP94, is used for early gene expression.

It localises to the virion. The enzyme catalyses RNA(n) + a ribonucleoside 5'-triphosphate = RNA(n+1) + diphosphate. Its function is as follows. Part of the DNA-dependent RNA polymerase which catalyzes the transcription of viral DNA into RNA using the four ribonucleoside triphosphates as substrates. Responsible for the transcription of early, intermediate and late genes. DNA-dependent RNA polymerase associates with the early transcription factor (ETF), itself composed of D6 and A7, thereby allowing the early genes transcription. Late transcription, and probably also intermediate transcription, require newly synthesized RNA polymerase. The sequence is that of DNA-directed RNA polymerase 35 kDa subunit (OPG156) from Bos taurus (Bovine).